The primary structure comprises 347 residues: MNHYIRTIGSMLILVYSMLAAFLFIDKVFVNIIYFQGMFYTQIFGIPVFLFLNLIIILLCIIVGSVLAYKINQQNDWIKTQIERSMEGETVGINDQNIEIYSETLDLYHTLVPLNQELHKLRLKTQNLTNENYNINDVKVKKIIEDERQRLARELHDSVSQQLFAASMMLSAIKETKLEPPLDQQIPILEKMVQDSQLEMRALLLHLRPLGLKDKSLGEGIKDLVIDLQKKVPMKVVHEIQDFKVPKGIEDHLFRITQEAISNTLRHSNGTKVTVELFNKDDYLLLRIQDNGKGFNVDEKLEQSYGLKNMRERALEIGATFHIVSLPDSGTRIEVKAPLNKEDSYDD.

Transmembrane regions (helical) follow at residues 13 to 33 and 43 to 63; these read ILVY…VNII and IFGI…CIIV. The region spanning 150 to 341 is the Histidine kinase domain; it reads RLARELHDSV…RIEVKAPLNK (192 aa). A Phosphohistidine modification is found at H156.

In terms of processing, autophosphorylated on His-156.

It is found in the cell membrane. The enzyme catalyses ATP + protein L-histidine = ADP + protein N-phospho-L-histidine.. Functionally, member of the two-component regulatory system PprA/PprB involved in biofilm formation by controlling the expression of many related genes including type IVb pili major subunit flp pilin, adhesin bapA or cupE fimbriae. Also modulates quorum-sensing signal production acting on both negative and positive modulators. Functions as a heme sensor histidine kinase which is autophosphorylated at a histidine residue and transfers its phosphate group to PprB. This Staphylococcus aureus (strain COL) protein is Sensor protein VraS (vraS).